The following is a 211-amino-acid chain: N-(5'-phosphoribosyl)anthranilate isomerase (211 aa).

Belongs to the TrpF family.

The enzyme catalyses N-(5-phospho-beta-D-ribosyl)anthranilate = 1-(2-carboxyphenylamino)-1-deoxy-D-ribulose 5-phosphate. Its pathway is amino-acid biosynthesis; L-tryptophan biosynthesis; L-tryptophan from chorismate: step 3/5. In Pseudomonas paraeruginosa (strain DSM 24068 / PA7) (Pseudomonas aeruginosa (strain PA7)), this protein is N-(5'-phosphoribosyl)anthranilate isomerase.